Consider the following 62-residue polypeptide: Protein DsrB (62 aa).

Belongs to the DsrB family.

The chain is Protein DsrB from Shigella flexneri serotype 5b (strain 8401).